Reading from the N-terminus, the 398-residue chain is Bombesin receptor subtype-3 (398 aa).

Residues 1 to 40 (MAQRQPHSPNQTLISITNDTESSSVVSNDNTNKGRSGDNS) are Extracellular-facing. Residues asparagine 10 and asparagine 18 are each glycosylated (N-linked (GlcNAc...) asparagine). A helical transmembrane segment spans residues 41-62 (PGIEALCAIYITYAVIISVGIL). The Cytoplasmic segment spans residues 63–81 (GNAILIKVFFKTKSMQTVP). Residues 82 to 102 (NIFITSLAFGDLLLLLTCVPV) form a helical membrane-spanning segment. The Extracellular portion of the chain corresponds to 103–120 (DATHYLAEGWLFGRIGCK). Cysteine 119 and cysteine 202 are joined by a disulfide. A helical membrane pass occupies residues 121–142 (VLSFIRLTSVGVSVFTLTILSA). Over 143–162 (DRYKAVVKPLERQPSNAILK) the chain is Cytoplasmic. The chain crosses the membrane as a helical span at residues 163–183 (TCIKAGCVWIVSMIFALPEAI). The Extracellular portion of the chain corresponds to 184 to 219 (FSNVYSFRDPNKNVTFESCTSYPVSKKLLQEIHSLL). Residues 220–240 (CFLVFYIIPLSIISVYYSLIA) traverse the membrane as a helical segment. Residues 241-271 (RTLYKSTLNIPTEEQGHARKQIESRKRIART) lie on the Cytoplasmic side of the membrane. A helical transmembrane segment spans residues 272 to 292 (VLVLVALFALCWLPNHLLYLY). The Extracellular portion of the chain corresponds to 293–312 (HSFTSQTYVDPSAMHFIFTI). The helical transmembrane segment at 313 to 332 (FSRVLAFSNSCVNPFALYWL) threads the bilayer. The Cytoplasmic segment spans residues 333 to 398 (SKTFQKHFKA…CSVKQAEDRV (66 aa)). Cysteine 346 carries the S-palmitoyl cysteine lipid modification.

This sequence belongs to the G-protein coupled receptor 1 family. In terms of assembly, interacts with C6orf89.

It is found in the cell membrane. In terms of biological role, role in sperm cell division, maturation, or function. This receptor mediates its action by association with G proteins that activate a phosphatidylinositol-calcium second messenger system. This chain is Bombesin receptor subtype-3 (BRS3), found in Macaca mulatta (Rhesus macaque).